Reading from the N-terminus, the 179-residue chain is Large ribosomal subunit protein uL5 (179 aa).

The protein belongs to the universal ribosomal protein uL5 family. Part of the 50S ribosomal subunit; part of the 5S rRNA/L5/L18/L25 subcomplex. Contacts the 5S rRNA and the P site tRNA. Forms a bridge to the 30S subunit in the 70S ribosome.

In terms of biological role, this is one of the proteins that bind and probably mediate the attachment of the 5S RNA into the large ribosomal subunit, where it forms part of the central protuberance. In the 70S ribosome it contacts protein S13 of the 30S subunit (bridge B1b), connecting the 2 subunits; this bridge is implicated in subunit movement. Contacts the P site tRNA; the 5S rRNA and some of its associated proteins might help stabilize positioning of ribosome-bound tRNAs. The chain is Large ribosomal subunit protein uL5 from Bdellovibrio bacteriovorus (strain ATCC 15356 / DSM 50701 / NCIMB 9529 / HD100).